The chain runs to 304 residues: GTP cyclohydrolase FolE2 (304 aa).

This sequence belongs to the GTP cyclohydrolase IV family.

The enzyme catalyses GTP + H2O = 7,8-dihydroneopterin 3'-triphosphate + formate + H(+). It functions in the pathway cofactor biosynthesis; 7,8-dihydroneopterin triphosphate biosynthesis; 7,8-dihydroneopterin triphosphate from GTP: step 1/1. In terms of biological role, converts GTP to 7,8-dihydroneopterin triphosphate. This Hahella chejuensis (strain KCTC 2396) protein is GTP cyclohydrolase FolE2.